The sequence spans 337 residues: G-protein coupled receptor 26 (337 aa).

Over 1–10 (MNSWDAGLAG) the chain is Extracellular. A helical transmembrane segment spans residues 11 to 31 (LLVGTMGVSLLSNALVLLCLL). Residues 32 to 47 (HSADIRRQAPALFTLN) are Cytoplasmic-facing. A helical membrane pass occupies residues 48-68 (LTCGNLLCTVVNMPLTLAGVV). Over 69–81 (AQRQPAGDRLCRL) the chain is Extracellular. Cysteines 79 and 156 form a disulfide. Residues 82-102 (AAFLDTFLAANSMLSMAALSI) form a helical membrane-spanning segment. Residues 103 to 123 (DRWVAVVFPLSYRAKMRLRDA) lie on the Cytoplasmic side of the membrane. A helical transmembrane segment spans residues 124-144 (ALMVAYTWLHALTFPAAALAL). Over 145–168 (SWLGFHQLYASCTLCSRRPDERLR) the chain is Extracellular. A helical membrane pass occupies residues 169-189 (FAVFTGAFHALSFLLSFVVLC). Over 190 to 245 (CTYLKVLKVARFHCKRIDVITMQTLVLLVDLHPSVRERCLEEQKRRRQRATKKIST) the chain is Cytoplasmic. Residues 246–266 (FIGTFLVCFAPYVITRLVELF) traverse the membrane as a helical segment. The Extracellular segment spans residues 267-276 (STVPIGSHWG). Residues 277 to 297 (VLSKCLAYSKAASDPFVYSLL) traverse the membrane as a helical segment. Residues 298 to 337 (RHQYRKSCKEILNRLLHRRSIHSSGLTGDSHSQNILPVSE) are Cytoplasmic-facing.

It belongs to the G-protein coupled receptor 1 family. As to expression, highly expressed in the CNS, the highest expression is seen in the amygdala, hippocampus and thalamus. Weak expression is detected in testis. Down-regulated in glioblastoma.

Its subcellular location is the cell membrane. Orphan receptor. Displays a significant level of constitutive activity. Its effect is mediated by G(s)-alpha protein that stimulate adenylate cyclase, resulting in an elevation of intracellular cAMP. The protein is G-protein coupled receptor 26 (GPR26) of Homo sapiens (Human).